Consider the following 268-residue polypeptide: Protein CONTINUOUS VASCULAR RING 1 (268 aa).

Residues 1-70 lie on the Cytoplasmic side of the membrane; sequence MGDEKPVIVM…GWASKKFMTG (70 aa). Residues 21–48 form a disordered region; that stretch reads IPVADSGDKDDGSSSKPSSSSSASSSSH. Low complexity predominate over residues 34 to 48; that stretch reads SSKPSSSSSASSSSH. The helical transmembrane segment at 71-91 threads the bilayer; sequence CVILLPIAITFYITWWFIHFV. Residues 92–103 lie on the Extracellular side of the membrane; that stretch reads DGFFSPIYAQLG. A helical transmembrane segment spans residues 104-124; that stretch reads INVFGFGFLTSIAFIFLVGVF. Residues 125–268 are Cytoplasmic-facing; sequence MSSWLGASVL…LASIDRATSL (144 aa).

This sequence belongs to the plant COV1 protein family. Mostly expressed in flowers and stems, and, to a lower extent, in roots and leaves.

It is found in the membrane. In terms of biological role, involved in the regulation of vascular patterning in the stem, probably by negatively regulating the differentiation of vascular tissue. This Arabidopsis thaliana (Mouse-ear cress) protein is Protein CONTINUOUS VASCULAR RING 1.